A 20-amino-acid polypeptide reads, in one-letter code: Cytochrome P450IIB (20 aa).

It belongs to the cytochrome P450 family. It depends on heme as a cofactor.

It localises to the endoplasmic reticulum membrane. The protein resides in the microsome membrane. It catalyses the reaction an organic molecule + reduced [NADPH--hemoprotein reductase] + O2 = an alcohol + oxidized [NADPH--hemoprotein reductase] + H2O + H(+). In terms of biological role, cytochromes P450 are a group of heme-thiolate monooxygenases. In liver microsomes, this enzyme is involved in an NADPH-dependent electron transport pathway. This isozyme is active upon P.nitroanisole, aniline, D-benzphetamine, delta(9)-tetrahydrocannabinol (THC) and strychnine. This is Cytochrome P450IIB from Cavia porcellus (Guinea pig).